The following is a 1734-amino-acid chain: Gag-Pol polyprotein (1734 aa).

Gly-2 carries N-myristoyl glycine; by host lipidation. Positions 109–112 (PTAP) match the PTAP/PSAP motif motif. Residues 112 to 217 (PILPSGPSTQ…STTSRAFPLR (106 aa)) form a disordered region. The LYPX(n)L motif signature appears at 128–132 (LYPAL). The PPXY motif motif lies at 161 to 164 (PPPY). Residue Ser-191 is modified to Phosphoserine; by host. The interval 344-392 (GRSPTNLAKVKGITQGPNESPSAFLERLKEAYRRYTPYDPEDHGQETSV) is interaction with host PIAS4. Positions 429–434 (IFNKRE) are interaction with host UBE2I. 2 stretches are compositionally biased toward basic and acidic residues: residues 433 to 474 (RETP…REMS) and 485 to 498 (RQDR…RPQL). Disordered stretches follow at residues 433-498 (RETP…RPQL) and 512-551 (WAKD…EPRI). Residues 437-477 (EEREERFRRETEENEERRRAEDEQREKERDRRRQREMSKLL) are a coiled coil. The CCHC-type zinc finger occupies 501–518 (DQCAYCKEKGHWAKDCPK). One can recognise a Peptidase A2 domain in the interval 560–630 (VTFLVDTGAQ…CPYPLLGRDL (71 aa)). The active-site Protease; shared with dimeric partner is Asp-565. The Reverse transcriptase domain occupies 740-931 (LDQGILVPCQ…KQVKYLGYLL (192 aa)). Positions 808, 882, 883, 1182, 1220, 1241, and 1311 each coordinate Mg(2+). In terms of domain architecture, RNase H type-1 spans 1173–1319 (PDADHTWYTD…ADQAAREAAI (147 aa)). The segment at 1386–1426 (HRLTHLGYQKMKALLDRGESPYYMLNRDKTLQYVADSCTVC) adopts an HHCC-type zinc-finger fold. The Integrase catalytic domain maps to 1443–1601 (RGHRPGTHWE…TPYEILYGAP (159 aa)). Asp-1454 and Asp-1513 together coordinate Mg(2+).

The protein belongs to the retroviral Pol polyprotein family. As to quaternary structure, homohexamer; further associates as homomultimer. The virus core is composed of a lattice formed from hexagonal rings, each containing six capsid monomers. Interacts with mouse UBE2I and mouse PIAS4. In terms of assembly, interacts (via PPXY motif) with host NEDD4. Interacts (via PSAP motif) with host TSG101. Interacts (via LYPX(n)L motif) with host PDCD6IP. The reverse transcriptase is a monomer (Potential). Interacts (via RNase domains) with host release factor ETF1; this interaction is essential for translational readthrough of amber codon between viral gag and pol genes, as well as for viral replication. As to quaternary structure, homodimer. Mg(2+) serves as cofactor. In terms of processing, ubiquitinated by ITCH. Gag can recruit the ubiquitin ligase Itch in an L domain-independent manner to facilitate virus release via a mechanism that involves Gag ubiquitination. Specific enzymatic cleavages by the viral protease yield mature proteins. The protease is released by autocatalytic cleavage. The polyprotein is cleaved during and after budding, this process is termed maturation. Post-translationally, sumoylated; which is required for virus replication. In terms of processing, phosphorylated on serine residues.

It localises to the virion. The protein localises to the host cell membrane. Its subcellular location is the host late endosome membrane. It is found in the host endosome. The protein resides in the host multivesicular body. It localises to the host cytoplasm. The enzyme catalyses DNA(n) + a 2'-deoxyribonucleoside 5'-triphosphate = DNA(n+1) + diphosphate. It carries out the reaction Endonucleolytic cleavage to 5'-phosphomonoester.. With respect to regulation, most efficiently inhibited by Amprenavir, which is able to block Gag-Pol processing in infected cells. Plays a role in budding and is processed by the viral protease during virion maturation outside the cell. During budding, it recruits, in a PPXY-dependent or independent manner, Nedd4-like ubiquitin ligases that conjugate ubiquitin molecules to Gag-Pol, or to Gag-Pol binding host factors. Interaction with HECT ubiquitin ligases probably links the viral protein to the host ESCRT pathway and facilitates release. Its function is as follows. Targets Gag and gag-pol polyproteins to the plasma membrane via a multipartite membrane binding signal, that includes its myristoylated N-terminus. Also mediates nuclear localization of the pre-integration complex. In terms of biological role, constituent of the pre-integration complex (PIC) which tethers the latter to mitotic chromosomes. This allows the integration of the viral genome into the host DNA. Functionally, forms the spherical core of the virion that encapsulates the genomic RNA-nucleocapsid complex. Involved in the packaging and encapsidation of two copies of the genome. Binds with high affinity to conserved UCUG elements within the packaging signal, located near the 5'-end of the genome. This binding is dependent on genome dimerization. Acts as a nucleic acid chaperone which is involved in rearrangement of nucleic acid secondary structures during gRNA retrotranscription. Its function is as follows. The aspartyl protease mediates proteolytic cleavages of Gag and Gag-Pol polyproteins during or shortly after the release of the virion from the plasma membrane. Cleavages take place as an ordered, step-wise cascade to yield mature proteins. This process is called maturation. Displays maximal activity during the budding process just prior to particle release from the cell (Potential). Cleaves the translation initiation factor eIF4G leading to the inhibition of host cap-dependent translation. In terms of biological role, RT is a multifunctional enzyme that converts the viral dimeric RNA genome into dsDNA in the cytoplasm, shortly after virus entry into the cell. This enzyme displays a DNA polymerase activity that can copy either DNA or RNA templates, and a ribonuclease H (RNase H) activity that cleaves the RNA strand of RNA-DNA heteroduplexes in a partially processive 3' to 5' endonucleasic mode. Conversion of viral genomic RNA into dsDNA requires many steps. A tRNA binds to the primer-binding site (PBS) situated at the 5' end of the viral RNA. RT uses the 3' end of the tRNA primer to perform a short round of RNA-dependent minus-strand DNA synthesis. The reading proceeds through the U5 region and ends after the repeated (R) region which is present at both ends of viral RNA. The portion of the RNA-DNA heteroduplex is digested by the RNase H, resulting in a ssDNA product attached to the tRNA primer. This ssDNA/tRNA hybridizes with the identical R region situated at the 3' end of viral RNA. This template exchange, known as minus-strand DNA strong stop transfer, can be either intra- or intermolecular. RT uses the 3' end of this newly synthesized short ssDNA to perform the RNA-dependent minus-strand DNA synthesis of the whole template. RNase H digests the RNA template except for a polypurine tract (PPT) situated at the 5' end of the genome. It is not clear if both polymerase and RNase H activities are simultaneous. RNase H probably can proceed both in a polymerase-dependent (RNA cut into small fragments by the same RT performing DNA synthesis) and a polymerase-independent mode (cleavage of remaining RNA fragments by free RTs). Secondly, RT performs DNA-directed plus-strand DNA synthesis using the PPT that has not been removed by RNase H as primers. PPT and tRNA primers are then removed by RNase H. The 3' and 5' ssDNA PBS regions hybridize to form a circular dsDNA intermediate. Strand displacement synthesis by RT to the PBS and PPT ends produces a blunt ended, linear dsDNA copy of the viral genome that includes long terminal repeats (LTRs) at both ends. Functionally, catalyzes viral DNA integration into the host chromosome, by performing a series of DNA cutting and joining reactions. This enzyme activity takes place after virion entry into a cell and reverse transcription of the RNA genome in dsDNA. The first step in the integration process is 3' processing. This step requires a complex comprising the viral genome, matrix protein and integrase. This complex is called the pre-integration complex (PIC). The integrase protein removes 2 nucleotides from each 3' end of the viral DNA, leaving recessed CA OH's at the 3' ends. In the second step that requires cell division, the PIC enters cell nucleus. In the third step, termed strand transfer, the integrase protein joins the previously processed 3' ends to the 5' ends of strands of target cellular DNA at the site of integration. The last step is viral DNA integration into host chromosome. The protein is Gag-Pol polyprotein (pol) of Mus musculus (Mouse).